Here is a 281-residue protein sequence, read N- to C-terminus: Aliphatic sulfonates import ATP-binding protein SsuB (281 aa).

Residues 40–263 (LDIRGLRKSF…QRGSAELAAL (224 aa)) enclose the ABC transporter domain. Residue 72–79 (GRSGCGKS) coordinates ATP.

Belongs to the ABC transporter superfamily. Aliphatic sulfonates importer (TC 3.A.1.17.2) family. As to quaternary structure, the complex is composed of two ATP-binding proteins (SsuB), two transmembrane proteins (SsuC) and a solute-binding protein (SsuA).

The protein localises to the cell inner membrane. It carries out the reaction ATP + H2O + aliphatic sulfonate-[sulfonate-binding protein]Side 1 = ADP + phosphate + aliphatic sulfonateSide 2 + [sulfonate-binding protein]Side 1.. In terms of biological role, part of the ABC transporter complex SsuABC involved in aliphatic sulfonates import. Responsible for energy coupling to the transport system. The sequence is that of Aliphatic sulfonates import ATP-binding protein SsuB from Rhodopseudomonas palustris (strain ATCC BAA-98 / CGA009).